The following is a 975-amino-acid chain: Glycine dehydrogenase (decarboxylating) (975 aa).

Position 723 is an N6-(pyridoxal phosphate)lysine (Lys723).

It belongs to the GcvP family. The glycine cleavage system is composed of four proteins: P, T, L and H. The cofactor is pyridoxal 5'-phosphate.

The enzyme catalyses N(6)-[(R)-lipoyl]-L-lysyl-[glycine-cleavage complex H protein] + glycine + H(+) = N(6)-[(R)-S(8)-aminomethyldihydrolipoyl]-L-lysyl-[glycine-cleavage complex H protein] + CO2. In terms of biological role, the glycine cleavage system catalyzes the degradation of glycine. The P protein binds the alpha-amino group of glycine through its pyridoxal phosphate cofactor; CO(2) is released and the remaining methylamine moiety is then transferred to the lipoamide cofactor of the H protein. This is Glycine dehydrogenase (decarboxylating) from Burkholderia vietnamiensis (strain G4 / LMG 22486) (Burkholderia cepacia (strain R1808)).